A 527-amino-acid polypeptide reads, in one-letter code: Phosphoenolpyruvate carboxykinase (ATP) (527 aa).

Substrate contacts are provided by Arg56, Tyr192, and Lys198. ATP is bound by residues Lys198, His217, and 233 to 241; that span reads GLSGTGKTT. 2 residues coordinate Mn(2+): Lys198 and His217. Asp254 contacts Mn(2+). 3 residues coordinate ATP: Glu282, Arg319, and Thr444. Arg319 provides a ligand contact to substrate.

Belongs to the phosphoenolpyruvate carboxykinase (ATP) family. The cofactor is Mn(2+).

The protein localises to the cytoplasm. It carries out the reaction oxaloacetate + ATP = phosphoenolpyruvate + ADP + CO2. Its pathway is carbohydrate biosynthesis; gluconeogenesis. Its function is as follows. Involved in the gluconeogenesis. Catalyzes the conversion of oxaloacetate (OAA) to phosphoenolpyruvate (PEP) through direct phosphoryl transfer between the nucleoside triphosphate and OAA. This is Phosphoenolpyruvate carboxykinase (ATP) from Bacillus subtilis (strain 168).